Reading from the N-terminus, the 255-residue chain is Tryptophan synthase alpha chain (255 aa).

Residues E49 and D60 each act as proton acceptor in the active site.

Belongs to the TrpA family. As to quaternary structure, tetramer of two alpha and two beta chains.

The enzyme catalyses (1S,2R)-1-C-(indol-3-yl)glycerol 3-phosphate + L-serine = D-glyceraldehyde 3-phosphate + L-tryptophan + H2O. It functions in the pathway amino-acid biosynthesis; L-tryptophan biosynthesis; L-tryptophan from chorismate: step 5/5. Functionally, the alpha subunit is responsible for the aldol cleavage of indoleglycerol phosphate to indole and glyceraldehyde 3-phosphate. This Desulfovibrio desulfuricans (strain ATCC 27774 / DSM 6949 / MB) protein is Tryptophan synthase alpha chain.